The following is a 67-amino-acid chain: uncharacterized protein (67 aa).

Belongs to the flocculin family.

This is an uncharacterized protein from Saccharomyces cerevisiae (strain ATCC 204508 / S288c) (Baker's yeast).